The following is a 428-amino-acid chain: Histone deacetylase 3 (428 aa).

Positions 3-316 (NRTSYFYDPD…WTFETSLLLE (314 aa)) are histone deacetylase. 1D-myo-inositol 1,4,5,6-tetrakisphosphate is bound by residues His17, Gly21, and Lys25. His135 is an active-site residue. Positions 170, 172, and 259 each coordinate Zn(2+). Arg265 provides a ligand contact to 1D-myo-inositol 1,4,5,6-tetrakisphosphate. The disordered stretch occupies residues 385–428 (LNYERNDEPDPDERGAEENYTRPEAANEFYDGDHDNDKESDVEI). Composition is skewed to basic and acidic residues over residues 386-405 (NYER…ENYT) and 415-428 (DGDH…DVEI).

It belongs to the histone deacetylase family. HD type 1 subfamily.

The protein resides in the nucleus. Its subcellular location is the chromosome. The protein localises to the cytoplasm. It localises to the cytosol. It carries out the reaction N(6)-acetyl-L-lysyl-[histone] + H2O = L-lysyl-[histone] + acetate. Inositol tetraphosphate (1D-myo-inositol 1,4,5,6-tetrakisphosphate) promotes the histone deacetylase activity by acting as an intermolecular glue between hdac3 and N-Cor repressor complex components. In terms of biological role, responsible for the deacetylation of lysine residues on the N-terminal part of the core histones (H2A, H2B, H3 and H4). Histone deacetylation gives a tag for epigenetic repression and plays an important role in transcriptional regulation, cell cycle progression and developmental events. Histone deacetylases act via the formation of large multiprotein complexes, such as N-Cor repressor complex, which activate the histone deacetylase activity. May play a role in the regulation of the circadian clock in a deacetylase activity-independent manner. In Tetraodon nigroviridis (Spotted green pufferfish), this protein is Histone deacetylase 3 (hdac3).